A 64-amino-acid chain; its full sequence is Protein DsrB (64 aa).

The protein belongs to the DsrB family.

This is Protein DsrB from Salmonella enteritidis PT4 (strain P125109).